The chain runs to 176 residues: Large ribosomal subunit protein uL10 (176 aa).

The protein belongs to the universal ribosomal protein uL10 family. Part of the ribosomal stalk of the 50S ribosomal subunit. The N-terminus interacts with L11 and the large rRNA to form the base of the stalk. The C-terminus forms an elongated spine to which L12 dimers bind in a sequential fashion forming a multimeric L10(L12)X complex.

Forms part of the ribosomal stalk, playing a central role in the interaction of the ribosome with GTP-bound translation factors. The chain is Large ribosomal subunit protein uL10 from Teredinibacter turnerae (strain ATCC 39867 / T7901).